Here is a 1337-residue protein sequence, read N- to C-terminus: DNA mismatch repair protein Msh6 (1337 aa).

Positions 68-130 (PGDLVWAKME…IKYLRPYKGS (63 aa)) constitute a PWWP domain. Positions 170–310 (AVCSEPSDTE…SEAPKRAAPV (141 aa)) are disordered. Over residues 176–187 (SDTEEAEEEEME) the composition is skewed to acidic residues. A compositionally biased stretch (basic and acidic residues) spans 226-248 (VLDSDSDRDGSDVEFKPDVKEAS). Over residues 257–272 (DENEATDVETDEESIE) the composition is skewed to acidic residues. Basic residues predominate over residues 279-292 (PSKRKRGNVSKPSK). The span at 294 to 305 (SSLENEHSEAPK) shows a compositional bias: basic and acidic residues. 1111-1118 (GPNMGGKS) is a binding site for ATP.

This sequence belongs to the DNA mismatch repair MutS family.

Its subcellular location is the nucleus. In terms of biological role, component of the post-replicative DNA mismatch repair system (MMR). Involved in B cell growth by positively regulating B cell proliferation and controlling replication efficiency. Controls cell cycle to prevent re-replication and defects in DNA damage-induced G2 checkpoint. Doesn't seem to counteract or control the immunoglobulin gene conversion (Ig GC) and to contribute to guanine/uracil mismatch repair. This is DNA mismatch repair protein Msh6 from Gallus gallus (Chicken).